Here is a 630-residue protein sequence, read N- to C-terminus: 1-deoxy-D-xylulose-5-phosphate synthase (630 aa).

Residues His72 and Gly113 to Ser115 contribute to the thiamine diphosphate site. Position 144 (Asp144) interacts with Mg(2+). Residues Gly145–Ala146, Asn173, Tyr284, and Glu367 contribute to the thiamine diphosphate site. Asn173 provides a ligand contact to Mg(2+).

The protein belongs to the transketolase family. DXPS subfamily. As to quaternary structure, homodimer. Mg(2+) serves as cofactor. Requires thiamine diphosphate as cofactor.

It catalyses the reaction D-glyceraldehyde 3-phosphate + pyruvate + H(+) = 1-deoxy-D-xylulose 5-phosphate + CO2. It participates in metabolic intermediate biosynthesis; 1-deoxy-D-xylulose 5-phosphate biosynthesis; 1-deoxy-D-xylulose 5-phosphate from D-glyceraldehyde 3-phosphate and pyruvate: step 1/1. Its function is as follows. Catalyzes the acyloin condensation reaction between C atoms 2 and 3 of pyruvate and glyceraldehyde 3-phosphate to yield 1-deoxy-D-xylulose-5-phosphate (DXP). In Geobacillus sp. (strain WCH70), this protein is 1-deoxy-D-xylulose-5-phosphate synthase.